The sequence spans 413 residues: uncharacterized protein (413 aa).

The region spanning 3-155 (MEPRVLRREE…SRVRLSVPAG (153 aa)) is the N-acetyltransferase domain. Acetyl-CoA is bound by residues 86-88 (VSV), 94-99 (RRGVLT), and 122-123 (SE). Tyrosine 127 acts as the Proton donor in catalysis. The active-site Proton acceptor; via carboxylate is the phenylalanine 413.

Belongs to the acetyltransferase Eis family. As to quaternary structure, homohexamer; trimer of dimers.

This is an uncharacterized protein from Streptomyces coelicolor (strain ATCC BAA-471 / A3(2) / M145).